The chain runs to 117 residues: Large ribosomal subunit protein eL8 (117 aa).

Belongs to the eukaryotic ribosomal protein eL8 family. As to quaternary structure, part of the 50S ribosomal subunit. Probably part of the RNase P complex.

It is found in the cytoplasm. In terms of biological role, multifunctional RNA-binding protein that recognizes the K-turn motif in ribosomal RNA, the RNA component of RNase P, box H/ACA, box C/D and box C'/D' sRNAs. In Methanococcus aeolicus (strain ATCC BAA-1280 / DSM 17508 / OCM 812 / Nankai-3), this protein is Large ribosomal subunit protein eL8.